The sequence spans 244 residues: 1-(5-phosphoribosyl)-5-[(5-phosphoribosylamino)methylideneamino] imidazole-4-carboxamide isomerase (244 aa).

Residue D10 is the Proton acceptor of the active site. Residue D132 is the Proton donor of the active site.

This sequence belongs to the HisA/HisF family.

Its subcellular location is the cytoplasm. The catalysed reaction is 1-(5-phospho-beta-D-ribosyl)-5-[(5-phospho-beta-D-ribosylamino)methylideneamino]imidazole-4-carboxamide = 5-[(5-phospho-1-deoxy-D-ribulos-1-ylimino)methylamino]-1-(5-phospho-beta-D-ribosyl)imidazole-4-carboxamide. Its pathway is amino-acid biosynthesis; L-histidine biosynthesis; L-histidine from 5-phospho-alpha-D-ribose 1-diphosphate: step 4/9. The chain is 1-(5-phosphoribosyl)-5-[(5-phosphoribosylamino)methylideneamino] imidazole-4-carboxamide isomerase from Xanthomonas axonopodis pv. citri (strain 306).